The following is a 522-amino-acid chain: 56 kDa type-specific antigen (522 aa).

The signal sequence occupies residues 1-22 (MKKIMLIASAMSALSLPFSASA). Residues 67–87 (LTTMLPFGGTLAAGMTIAPGF) form a helical membrane-spanning segment. Residues 385 to 417 (AQEEGDDQSQVSCNDKKQQAVAEDSKAGSSKEG) are disordered. Over residues 398-417 (NDKKQQAVAEDSKAGSSKEG) the composition is skewed to basic and acidic residues. The helical transmembrane segment at 470-490 (IGVVASGVLGVAINVADGVCV) threads the bilayer.

It is found in the cell membrane. Its function is as follows. May be an adherent factor for rickettsial adsorption to the host-cell surface and a determinant of virulence of individual rickettsial strain. It is the major outer membrane protein. In Orientia tsutsugamushi (Rickettsia tsutsugamushi), this protein is 56 kDa type-specific antigen.